A 124-amino-acid polypeptide reads, in one-letter code: Putative calmodulin-3 (124 aa).

4 EF-hand domains span residues 1–18 (GCITTKELGTVMRSLGQN), 19–54 (PTEAELQDMINEVDADGNGTIDFPEFLNLMARKIKD), 56–91 (DFEEELKEAFRVFDKDRNGFISAAELPHVMTNLGEK), and 92–124 (LTDEEVDEIIREADVDCDGQINYDEFVKVMMAK). Residues Cys2, Glu7, Asp32, Asp34, Asn36, Thr38, Glu43, Asp69, Asp71, Asn73, and Glu80 each contribute to the Ca(2+) site. Position 91 is an N6,N6,N6-trimethyllysine (Lys91). 5 residues coordinate Ca(2+): Asp105, Asp107, Asp109, Gln111, and Glu116.

It belongs to the calmodulin family. Not detected in the organs tested.

Functionally, calmodulin mediates the control of a large number of enzymes, ion channels and other proteins by Ca(2+). Among the enzymes to be stimulated by the calmodulin-Ca(2+) complex are a number of protein kinases and phosphatases. The chain is Putative calmodulin-3 (PCM3) from Solanum tuberosum (Potato).